The following is a 217-amino-acid chain: Tectonin-1 (217 aa).

6 tandem repeats follow at residues 2–37 (VHWE…HWDG), 38–74 (HKWH…DRSN), 75–111 (NKWT…DHHH), 112–146 (NKWD…RWDG), 147–182 (SKVD…LKHG), and 183–217 (KDWE…KATL). Residues 2–217 (VHWEKHEGEL…KLHHIYKATL (216 aa)) form a 6 X approximate tandem repeats region.

This sequence belongs to the tectonin family.

The protein localises to the cell surface. It is found in the cytoplasmic vesicle membrane. Functionally, probably involved in bacterial recognition. May be a lectin that function as part of a transmembrane signaling complex during phagocytosis. This Physarum polycephalum (Slime mold) protein is Tectonin-1 (TECA).